A 138-amino-acid polypeptide reads, in one-letter code: Large ribosomal subunit protein uL16 (138 aa).

This sequence belongs to the universal ribosomal protein uL16 family. As to quaternary structure, part of the 50S ribosomal subunit.

In terms of biological role, binds 23S rRNA and is also seen to make contacts with the A and possibly P site tRNAs. In Chlamydia pneumoniae (Chlamydophila pneumoniae), this protein is Large ribosomal subunit protein uL16.